The sequence spans 46 residues: Protein PsbN (46 aa).

A helical transmembrane segment spans residues 10–30; sequence VAIAVLAALLGLTGFGVYTAF.

The protein belongs to the PsbN family.

It localises to the cellular thylakoid membrane. In terms of biological role, may play a role in photosystem I and II biogenesis. The polypeptide is Protein PsbN (Synechococcus sp. (strain CC9311)).